The chain runs to 542 residues: GMP synthase [glutamine-hydrolyzing] (542 aa).

Residues 28–218 enclose the Glutamine amidotransferase type-1 domain; it reads MIVILDFGSQ…VYHICECEPT (191 aa). Cysteine 105 (nucleophile) is an active-site residue. Catalysis depends on residues histidine 192 and glutamate 194. One can recognise a GMPS ATP-PPase domain in the interval 219–417; the sequence is WTTEAFVDET…IGLPEEIVRR (199 aa). 246 to 252 provides a ligand contact to ATP; sequence SGGVDSS.

In terms of assembly, homodimer.

The catalysed reaction is XMP + L-glutamine + ATP + H2O = GMP + L-glutamate + AMP + diphosphate + 2 H(+). The protein operates within purine metabolism; GMP biosynthesis; GMP from XMP (L-Gln route): step 1/1. Functionally, catalyzes the synthesis of GMP from XMP. The protein is GMP synthase [glutamine-hydrolyzing] of Crocosphaera subtropica (strain ATCC 51142 / BH68) (Cyanothece sp. (strain ATCC 51142)).